The sequence spans 227 residues: AN1-type zinc finger protein 3 (227 aa).

Residues 12–44 form an A20-type zinc finger; it reads PSLPPRCPCGFWGSSKTMNLCSKCFADFQKKQP. Zn(2+) is bound by residues cysteine 18, cysteine 20, cysteine 32, and cysteine 35. Disordered stretches follow at residues 41–99 and 113–151; these read KKQP…TEEC and PTKRSCGADSQSENEASPVKRPRLVENPERPEESGRSKQ. Low complexity-rich tracts occupy residues 49 to 59 and 66 to 77; these read TPSTSNSQSDL and SDNNNTSVTTPT. Polar residues-rich tracts occupy residues 78–96 and 113–127; these read LSPSQQSLPTELNVTSPST and PTKRSCGADSQSENE. The span at 135–148 shows a compositional bias: basic and acidic residues; it reads RLVENPERPEESGR. Residues 151-200 form an AN1-type zinc finger; it reads QKSRRRCFQCQTKLELVQQELGSCRCGYVFCMLHRLPEQHDCTFDHMGRG. Zn(2+) is bound by residues cysteine 157, cysteine 160, cysteine 174, cysteine 176, cysteine 181, histidine 184, histidine 190, and cysteine 192.

In terms of tissue distribution, expressed in testis.

The sequence is that of AN1-type zinc finger protein 3 (Zfand3) from Mus musculus (Mouse).